Reading from the N-terminus, the 72-residue chain is DNA gyrase inhibitor YacG (72 aa).

4 residues coordinate Zn(2+): C7, C10, C26, and C30. The interval 44–72 (SIAGEEHTPSSDTARPQLSAEDLALLEQD) is disordered.

Belongs to the DNA gyrase inhibitor YacG family. As to quaternary structure, interacts with GyrB. It depends on Zn(2+) as a cofactor.

Functionally, inhibits all the catalytic activities of DNA gyrase by preventing its interaction with DNA. Acts by binding directly to the C-terminal domain of GyrB, which probably disrupts DNA binding by the gyrase. The sequence is that of DNA gyrase inhibitor YacG from Tolumonas auensis (strain DSM 9187 / NBRC 110442 / TA 4).